Reading from the N-terminus, the 346-residue chain is ATP-dependent 6-phosphofructokinase (346 aa).

ATP is bound by residues Gly13, 76–77 (RL), and 106–109 (GEGT). Glu107 provides a ligand contact to Mg(2+). Substrate-binding positions include 129-131 (TID), Arg166, 173-175 (MGR), Glu226, Arg270, and 276-279 (HIQR). The active-site Proton acceptor is the Asp131.

It belongs to the phosphofructokinase type A (PFKA) family. Mixed-substrate PFK group III subfamily. Homodimer or homotetramer. Requires Mg(2+) as cofactor.

Its subcellular location is the cytoplasm. The enzyme catalyses beta-D-fructose 6-phosphate + ATP = beta-D-fructose 1,6-bisphosphate + ADP + H(+). The protein operates within carbohydrate degradation; glycolysis; D-glyceraldehyde 3-phosphate and glycerone phosphate from D-glucose: step 3/4. Catalyzes the phosphorylation of D-fructose 6-phosphate to fructose 1,6-bisphosphate by ATP, the first committing step of glycolysis. In Corynebacterium efficiens (strain DSM 44549 / YS-314 / AJ 12310 / JCM 11189 / NBRC 100395), this protein is ATP-dependent 6-phosphofructokinase.